The sequence spans 285 residues: tRNA (cytidine(32)/guanosine(34)-2'-O)-methyltransferase (285 aa).

S-adenosyl-L-methionine-binding residues include Gly-53, Trp-55, Asp-83, Asp-99, and Asp-124. Lys-164 functions as the Proton acceptor in the catalytic mechanism.

The protein belongs to the class I-like SAM-binding methyltransferase superfamily. RNA methyltransferase RlmE family. TRM7 subfamily.

The protein localises to the cytoplasm. The enzyme catalyses cytidine(32)/guanosine(34) in tRNA + 2 S-adenosyl-L-methionine = 2'-O-methylcytidine(32)/2'-O-methylguanosine(34) in tRNA + 2 S-adenosyl-L-homocysteine + 2 H(+). Methylates the 2'-O-ribose of nucleotides at positions 32 and 34 of the tRNA anticodon loop of substrate tRNAs. Requires trm732 for methylation of the cytidine at position 32 of the anticodon loop of substrate tRNAs. Requires trm734 for methylation of the nucleotide at position 34 of the anticodon loop of substrate tRNAs. Methylates tRNA(Phe). The chain is tRNA (cytidine(32)/guanosine(34)-2'-O)-methyltransferase from Schizosaccharomyces pombe (strain 972 / ATCC 24843) (Fission yeast).